A 692-amino-acid polypeptide reads, in one-letter code: Protein artemis (692 aa).

T380 is modified (phosphothreonine). A Phosphoserine modification is found at S385. Disordered stretches follow at residues 504 to 555 (LENF…DSQS) and 640 to 664 (STNADSQSSSDFEVPSTPEAELPKR). Polar residues predominate over residues 506-520 (NFPSSTVAGGSQSPK). Residues 530-543 (THISSQNSSQSTHI) are compositionally biased toward low complexity. Composition is skewed to polar residues over residues 544–555 (TEQGSQGWDSQS) and 640–650 (STNADSQSSSD). A Phosphoserine; by ATM modification is found at S645.

Belongs to the DNA repair metallo-beta-lactamase (DRMBL) family. Interacts with LIG4; the interaction is direct. Interacts with ATM. Interacts with BRCA1. Interacts with PRKDC. Interacts with TP53BP1. Also exhibits ATM- and phosphorylation-dependent interaction with the MRN complex, composed of MRE11, RAD50, and NBN. In terms of processing, phosphorylation on undefined residues by PRKDC may stimulate endonucleolytic activity on 5' and 3' hairpins and overhangs. PRKDC must remain present, even after phosphorylation, for efficient hairpin opening. Also phosphorylated by ATM in response to ionizing radiation (IR) and by ATR in response to ultraviolet (UV) radiation. Ubiquitously expressed, with highest levels in the kidney, lung, pancreas and placenta (at the mRNA level). Expression is not increased in thymus or bone marrow, sites of V(D)J recombination.

The protein localises to the nucleus. In terms of biological role, nuclease involved in DNA non-homologous end joining (NHEJ); required for double-strand break repair and V(D)J recombination. Required for V(D)J recombination, the process by which exons encoding the antigen-binding domains of immunoglobulins and T-cell receptor proteins are assembled from individual V, (D), and J gene segments. V(D)J recombination is initiated by the lymphoid specific RAG endonuclease complex, which generates site specific DNA double strand breaks (DSBs). These DSBs present two types of DNA end structures: hairpin sealed coding ends and phosphorylated blunt signal ends. These ends are independently repaired by the non homologous end joining (NHEJ) pathway to form coding and signal joints respectively. This protein exhibits single-strand specific 5'-3' exonuclease activity in isolation and acquires endonucleolytic activity on 5' and 3' hairpins and overhangs when in a complex with PRKDC. The latter activity is required specifically for the resolution of closed hairpins prior to the formation of the coding joint. Also required for the repair of complex DSBs induced by ionizing radiation, which require substantial end-processing prior to religation by NHEJ. This Homo sapiens (Human) protein is Protein artemis.